The following is a 146-amino-acid chain: 3-dehydroquinate dehydratase (146 aa).

Tyr23 serves as the catalytic Proton acceptor. Residues Asn74, His80, and Asp87 each coordinate substrate. His100 functions as the Proton donor in the catalytic mechanism. Residues 101–102 (IS) and Arg111 each bind substrate.

This sequence belongs to the type-II 3-dehydroquinase family. As to quaternary structure, homododecamer.

It carries out the reaction 3-dehydroquinate = 3-dehydroshikimate + H2O. The protein operates within metabolic intermediate biosynthesis; chorismate biosynthesis; chorismate from D-erythrose 4-phosphate and phosphoenolpyruvate: step 3/7. Its function is as follows. Catalyzes a trans-dehydration via an enolate intermediate. This is 3-dehydroquinate dehydratase from Bacillus cereus (strain B4264).